Consider the following 286-residue polypeptide: Formamidopyrimidine-DNA glycosylase (286 aa).

Pro-2 acts as the Schiff-base intermediate with DNA in catalysis. Glu-3 functions as the Proton donor in the catalytic mechanism. Residue Lys-61 is the Proton donor; for beta-elimination activity of the active site. Residues His-103, Arg-122, and Arg-164 each contribute to the DNA site. The FPG-type zinc finger occupies 250–284; that stretch reads NAYGQTGEPCGRCGTQIVRENFMNRGSHYCPNCQK. The Proton donor; for delta-elimination activity role is filled by Arg-274.

Belongs to the FPG family. As to quaternary structure, monomer. Zn(2+) is required as a cofactor.

It carries out the reaction Hydrolysis of DNA containing ring-opened 7-methylguanine residues, releasing 2,6-diamino-4-hydroxy-5-(N-methyl)formamidopyrimidine.. The enzyme catalyses 2'-deoxyribonucleotide-(2'-deoxyribose 5'-phosphate)-2'-deoxyribonucleotide-DNA = a 3'-end 2'-deoxyribonucleotide-(2,3-dehydro-2,3-deoxyribose 5'-phosphate)-DNA + a 5'-end 5'-phospho-2'-deoxyribonucleoside-DNA + H(+). Its function is as follows. Involved in base excision repair of DNA damaged by oxidation or by mutagenic agents. Acts as a DNA glycosylase that recognizes and removes damaged bases. Has a preference for oxidized purines, such as 7,8-dihydro-8-oxoguanine (8-oxoG). Has AP (apurinic/apyrimidinic) lyase activity and introduces nicks in the DNA strand. Cleaves the DNA backbone by beta-delta elimination to generate a single-strand break at the site of the removed base with both 3'- and 5'-phosphates. The chain is Formamidopyrimidine-DNA glycosylase from Corynebacterium glutamicum (strain R).